The following is a 75-amino-acid chain: Dermaseptin-S11 (75 aa).

The first 22 residues, 1-22 (MAFLKKSLFLVLFLGMVSLSIC), serve as a signal peptide directing secretion. A propeptide spanning residues 23 to 45 (EEEKRENEDEEEQEDDEQSEEKR) is cleaved from the precursor. The tract at residues 25–44 (EKRENEDEEEQEDDEQSEEK) is disordered. Acidic residues predominate over residues 30 to 41 (EDEEEQEDDEQS).

Belongs to the frog skin active peptide (FSAP) family. Dermaseptin subfamily. In terms of tissue distribution, expressed by the skin glands.

It is found in the secreted. Its subcellular location is the target cell membrane. Antimicrobial peptide with activity against Gram-positive and Gram-negative bacteria, and fungi. Has hemolytic activity. This is Dermaseptin-S11 from Phyllomedusa sauvagei (Sauvage's leaf frog).